A 1099-amino-acid chain; its full sequence is ATP-dependent helicase/deoxyribonuclease subunit B (1099 aa).

The [4Fe-4S] cluster site is built by Cys-766, Cys-1056, Cys-1059, and Cys-1065.

This sequence belongs to the helicase family. AddB/RexB type 2 subfamily. As to quaternary structure, heterodimer of AddA and RexB. The cofactor is Mg(2+). [4Fe-4S] cluster serves as cofactor.

The heterodimer acts as both an ATP-dependent DNA helicase and an ATP-dependent, dual-direction single-stranded exonuclease. Recognizes the chi site generating a DNA molecule suitable for the initiation of homologous recombination. This subunit has 5' -&gt; 3' nuclease activity but not helicase activity. The chain is ATP-dependent helicase/deoxyribonuclease subunit B from Lactococcus lactis subsp. cremoris (strain SK11).